A 184-amino-acid polypeptide reads, in one-letter code: Photosystem I assembly protein Ycf4 (184 aa).

The next 2 membrane-spanning stretches (helical) occupy residues 22-42 and 57-77; these read FCWAFILFLGSLGFLLVGTSS and IIFFPQGIVMSFYGIAGLFIS.

It belongs to the Ycf4 family.

The protein localises to the plastid. Its subcellular location is the chloroplast thylakoid membrane. Seems to be required for the assembly of the photosystem I complex. The protein is Photosystem I assembly protein Ycf4 of Arabis hirsuta (Hairy rock-cress).